The primary structure comprises 263 residues: MLLHPQFDPVAFSVGPLSVRWYGLMYLVAFVQFIFLGRYRIKTRPGFLSVEQLDDLLFYGMLGVILGGRLGQVLFYEPAYFLANPLEIFAVWKGGMSFHGGFLGVLVAMGLWTRKHHLNWFEVMDFVAPLVPLGLAAGRVGNFINGELWGRVADASLPWAMIFPQSGDMQPRHPSQLYHVGLEGLALFVILWWFTAKPRPRAAASGAFLIGYGAFRFITEYFREPDHGIFGQSYTISMGQWLSLPMILIGVAMVVFAYRKKSL.

The next 3 membrane-spanning stretches (helical) occupy residues 17-37 (LSVRWYGLMYLVAFVQFIFLG), 56-76 (LLFYGMLGVILGGRLGQVLFY), and 88-108 (IFAVWKGGMSFHGGFLGVLVA). Residue arginine 139 participates in a 1,2-diacyl-sn-glycero-3-phospho-(1'-sn-glycerol) binding. The next 2 helical transmembrane spans lie at 176–196 (QLYHVGLEGLALFVILWWFTA) and 236–256 (ISMGQWLSLPMILIGVAMVVF).

It belongs to the Lgt family.

Its subcellular location is the cell inner membrane. The enzyme catalyses L-cysteinyl-[prolipoprotein] + a 1,2-diacyl-sn-glycero-3-phospho-(1'-sn-glycerol) = an S-1,2-diacyl-sn-glyceryl-L-cysteinyl-[prolipoprotein] + sn-glycerol 1-phosphate + H(+). It functions in the pathway protein modification; lipoprotein biosynthesis (diacylglyceryl transfer). Functionally, catalyzes the transfer of the diacylglyceryl group from phosphatidylglycerol to the sulfhydryl group of the N-terminal cysteine of a prolipoprotein, the first step in the formation of mature lipoproteins. The polypeptide is Phosphatidylglycerol--prolipoprotein diacylglyceryl transferase (Dechloromonas aromatica (strain RCB)).